The following is a 315-amino-acid chain: Solute carrier family 25 member 32 (315 aa).

Solcar repeat units follow at residues 20–109, 118–209, and 222–306; these read HVRY…IKSY, LEAT…LKLK, and LSTV…VSHF. Helical transmembrane passes span 26–43, 89–106, 123–143, 186–203, 227–243, and 281–300; these read LVAGVSGGVLSNLALHPL, VWGAGLSWGLYFFFYNAI, YLVSAAEAGAMTLCITNPLWV, FVPGLFGTSHGALQFMAY, YISVAALSKIFAVAATY, and GIAPNLIRVTPACCITFVVY.

It belongs to the mitochondrial carrier (TC 2.A.29) family.

It is found in the mitochondrion inner membrane. It catalyses the reaction FAD(in) = FAD(out). Functionally, facilitates flavin adenine dinucleotide (FAD) translocation across the mitochondrial inner membrane into the mitochondrial matrix where it acts as a redox cofactor to assist flavoenzyme activities in fundamental metabolic processes including fatty acid beta-oxidation, amino acid and choline metabolism as well as mitochondrial electron transportation. In particular, provides FAD to DLD dehydrogenase of the glycine cleavage system, part of mitochondrial one-carbon metabolic pathway involved in neural tube closure in early embryogenesis. In Macaca fascicularis (Crab-eating macaque), this protein is Solute carrier family 25 member 32.